Here is a 235-residue protein sequence, read N- to C-terminus: Caffeoyl-CoA O-methyltransferase (235 aa).

Lys8 is a binding site for substrate. S-adenosyl-L-methionine-binding positions include Val52, Glu74, Gly76–Val77, Ser82, Asp100, and Ala129. A substrate-binding site is contributed by Asp151. Asp151 contacts a divalent metal cation. Asp153 serves as a coordination point for S-adenosyl-L-methionine. A divalent metal cation is bound by residues Asp177 and Asn178.

Belongs to the class I-like SAM-binding methyltransferase superfamily. Cation-dependent O-methyltransferase family. CCoAMT subfamily. The cofactor is a divalent metal cation.

The catalysed reaction is (E)-caffeoyl-CoA + S-adenosyl-L-methionine = (E)-feruloyl-CoA + S-adenosyl-L-homocysteine + H(+). It functions in the pathway aromatic compound metabolism; phenylpropanoid biosynthesis. Its function is as follows. Methylates caffeoyl-CoA to feruloyl-CoA and 5-hydroxyferuloyl-CoA to sinapoyl-CoA. Plays a role in the synthesis of feruloylated polysaccharides. Involved in the reinforcement of the plant cell wall. Also involved in the responding to wounding or pathogen challenge by the increased formation of cell wall-bound ferulic acid polymers. This chain is Caffeoyl-CoA O-methyltransferase, found in Populus kitakamiensis (Aspen).